The sequence spans 587 residues: Glutathione hydrolase proenzyme (587 aa).

The signal sequence occupies residues 1-28; the sequence is MKRTWNVCLTALLSVLLVAGSVPFHAEA. Residues 29-35 constitute a propeptide that is removed on maturation; the sequence is KKPPKSY. Residue Arg-113 participates in L-glutamate binding. Thr-403 acts as the Nucleophile in catalysis. L-glutamate contacts are provided by residues Thr-421, Glu-423, Glu-442, Asp-445, 464–465, and 485–486; these read SS and GG.

It belongs to the gamma-glutamyltransferase family. As to quaternary structure, this enzyme consists of two polypeptide chains, which are synthesized in precursor form from a single polypeptide. In terms of processing, cleaved by autocatalysis into a large and a small subunit.

Its subcellular location is the secreted. It carries out the reaction an N-terminal (5-L-glutamyl)-[peptide] + an alpha-amino acid = 5-L-glutamyl amino acid + an N-terminal L-alpha-aminoacyl-[peptide]. The enzyme catalyses glutathione + H2O = L-cysteinylglycine + L-glutamate. It catalyses the reaction an S-substituted glutathione + H2O = an S-substituted L-cysteinylglycine + L-glutamate. Its pathway is sulfur metabolism; glutathione metabolism. Its function is as follows. Cleaves the gamma-glutamyl bond of extracellular glutathione (gamma-Glu-Cys-Gly), glutathione conjugates, and other gamma-glutamyl compounds. The metabolism of glutathione releases free glutamate and the dipeptide cysteinyl-glycine, which is hydrolyzed to cysteine and glycine by dipeptidases. The sequence is that of Glutathione hydrolase proenzyme (ggt) from Bacillus subtilis (strain 168).